A 139-amino-acid chain; its full sequence is D-ribose pyranase (139 aa).

The active-site Proton donor is H20. Residues D28, H106, and 128–130 (YAN) each bind substrate.

It belongs to the RbsD / FucU family. RbsD subfamily. As to quaternary structure, homodecamer.

It localises to the cytoplasm. It carries out the reaction beta-D-ribopyranose = beta-D-ribofuranose. It participates in carbohydrate metabolism; D-ribose degradation; D-ribose 5-phosphate from beta-D-ribopyranose: step 1/2. Functionally, catalyzes the interconversion of beta-pyran and beta-furan forms of D-ribose. This Aliivibrio fischeri (strain MJ11) (Vibrio fischeri) protein is D-ribose pyranase.